The following is a 102-amino-acid chain: ATP-dependent Clp protease adapter protein ClpS (102 aa).

It belongs to the ClpS family. Binds to the N-terminal domain of the chaperone ClpA.

In terms of biological role, involved in the modulation of the specificity of the ClpAP-mediated ATP-dependent protein degradation. The chain is ATP-dependent Clp protease adapter protein ClpS from Shewanella putrefaciens (strain CN-32 / ATCC BAA-453).